Here is a 647-residue protein sequence, read N- to C-terminus: Threonine--tRNA ligase (647 aa).

The 61-residue stretch at Met1–Thr61 folds into the TGS domain. The segment at Asp242 to Pro540 is catalytic. The Zn(2+) site is built by Cys336, His387, and His517.

Belongs to the class-II aminoacyl-tRNA synthetase family. As to quaternary structure, homodimer. Zn(2+) serves as cofactor.

It localises to the cytoplasm. It carries out the reaction tRNA(Thr) + L-threonine + ATP = L-threonyl-tRNA(Thr) + AMP + diphosphate + H(+). Its function is as follows. Catalyzes the attachment of threonine to tRNA(Thr) in a two-step reaction: L-threonine is first activated by ATP to form Thr-AMP and then transferred to the acceptor end of tRNA(Thr). Also edits incorrectly charged L-seryl-tRNA(Thr). This chain is Threonine--tRNA ligase, found in Streptococcus pneumoniae (strain 70585).